The chain runs to 1201 residues: DNA-directed RNA polymerase subunit beta (1201 aa).

The tract at residues Asp1165–Gln1201 is disordered. Residues Gln1172–Lys1189 are compositionally biased toward basic and acidic residues. The span at Ser1191–Gln1201 shows a compositional bias: polar residues.

This sequence belongs to the RNA polymerase beta chain family. As to quaternary structure, the RNAP catalytic core consists of 2 alpha, 1 beta, 1 beta' and 1 omega subunit. When a sigma factor is associated with the core the holoenzyme is formed, which can initiate transcription.

The catalysed reaction is RNA(n) + a ribonucleoside 5'-triphosphate = RNA(n+1) + diphosphate. Its function is as follows. DNA-dependent RNA polymerase catalyzes the transcription of DNA into RNA using the four ribonucleoside triphosphates as substrates. This Lactiplantibacillus plantarum (strain ATCC BAA-793 / NCIMB 8826 / WCFS1) (Lactobacillus plantarum) protein is DNA-directed RNA polymerase subunit beta.